A 416-amino-acid chain; its full sequence is Serine hydroxymethyltransferase 1 (416 aa).

(6S)-5,6,7,8-tetrahydrofolate contacts are provided by residues leucine 121 and 125-127 (GHL). Position 229 is an N6-(pyridoxal phosphate)lysine (lysine 229). Residues glutamate 245 and 354–356 (SPF) each bind (6S)-5,6,7,8-tetrahydrofolate.

Belongs to the SHMT family. As to quaternary structure, homodimer. The cofactor is pyridoxal 5'-phosphate.

The protein localises to the cytoplasm. It carries out the reaction (6R)-5,10-methylene-5,6,7,8-tetrahydrofolate + glycine + H2O = (6S)-5,6,7,8-tetrahydrofolate + L-serine. It participates in one-carbon metabolism; tetrahydrofolate interconversion. The protein operates within amino-acid biosynthesis; glycine biosynthesis; glycine from L-serine: step 1/1. Functionally, catalyzes the reversible interconversion of serine and glycine with tetrahydrofolate (THF) serving as the one-carbon carrier. This reaction serves as the major source of one-carbon groups required for the biosynthesis of purines, thymidylate, methionine, and other important biomolecules. Also exhibits THF-independent aldolase activity toward beta-hydroxyamino acids, producing glycine and aldehydes, via a retro-aldol mechanism. The protein is Serine hydroxymethyltransferase 1 of Vibrio parahaemolyticus serotype O3:K6 (strain RIMD 2210633).